The sequence spans 347 residues: Very-long-chain 3-oxoacyl-CoA reductase (347 aa).

The helical transmembrane segment at 20–40 threads the bilayer; sequence LLWVVFGLGVLKCTTLSLRFL. 6 residues coordinate NADP(+): D120, N147, Y223, K227, V256, and S258. The Proton donor role is filled by Y223. Catalysis depends on K227, which acts as the Lowers pKa of active site Tyr.

The protein belongs to the short-chain dehydrogenases/reductases (SDR) family. Interacts with the fatty acid elongation system components ELO3 and TSC13.

The protein localises to the endoplasmic reticulum membrane. It carries out the reaction a very-long-chain (3R)-3-hydroxyacyl-CoA + NADP(+) = a very-long-chain 3-oxoacyl-CoA + NADPH + H(+). It catalyses the reaction 3-oxooctadecanoyl-CoA + NADPH + H(+) = (3R)-hydroxyoctadecanoyl-CoA + NADP(+). The enzyme catalyses 3-oxoeicosanoyl-CoA + NADPH + H(+) = (3R)-hydroxyeicosanoyl-CoA + NADP(+). The catalysed reaction is 3-oxodocosanoyl-CoA + NADPH + H(+) = (3R)-hydroxydocosanoyl-CoA + NADP(+). It carries out the reaction 3-oxotetracosanoyl-CoA + NADPH + H(+) = (3R)-hydroxytetracosanoyl-CoA + NADP(+). It catalyses the reaction 3-oxohexacosanoyl-CoA + NADPH + H(+) = (3R)-hydroxyhexacosanoyl-CoA + NADP(+). It functions in the pathway lipid metabolism; fatty acid biosynthesis. Component of the microsomal membrane bound fatty acid elongation system, which produces the 26-carbon very long-chain fatty acids (VLCFA) from palmitate. Catalyzes the reduction of the 3-ketoacyl-CoA intermediate that is formed in each cycle of fatty acid elongation. VLCFAs serve as precursors for ceramide and sphingolipids. The protein is Very-long-chain 3-oxoacyl-CoA reductase (IFA38) of Saccharomyces cerevisiae (strain ATCC 204508 / S288c) (Baker's yeast).